A 301-amino-acid polypeptide reads, in one-letter code: Single-stranded DNA-binding protein (301 aa).

Residues 3 to 7 are LAST; that stretch reads KRKST. Histidine 64, cysteine 77, cysteine 87, and cysteine 90 together coordinate Zn(2+). Residues 272 to 301 form a disordered region; that stretch reads TKTEDDFMSSSSGSSSSADDTDLDDLLNDL. Residues 279 to 289 show a composition bias toward low complexity; that stretch reads MSSSSGSSSSA. Positions 290–301 are enriched in acidic residues; it reads DDTDLDDLLNDL.

This sequence belongs to the Tequatrovirus single-stranded DNA-binding protein family. In terms of assembly, homodimer in the absence of DNA, monomer when binding DNA. Interacts with the DNA helicase assembly protein; a ternary complex between the helicase assembly protein, the single-stranded DNA-binding protein and ssDNA is an obligatory intermediate in the helicase loading mechanism. Part of the replicase complex that includes the DNA polymerase, the polymerase clamp, the clamp loader complex, the single-stranded DNA binding protein, the primase, the DnaB-like SF4 replicative helicase and the helicase assembly factor. Interacts (via C-terminus) with the viral SF1 dDA helicase. Interacts with the viral SF2 UvsW repair helicase.

In terms of biological role, single-stranded DNA-binding protein that participates in viral DNA replication, recombination, and repair. Coats the lagging-strand ssDNA as the replication fork advances. Stimulates the activities of viral DNA polymerase and DnaB-like SF4 replicative helicase, probably via its interaction with the helicase assembly factor. Stimulates the unwinding activity of UvsW helicase, inhibits it DNA winding activity. Together with DnaB-like SF4 replicative helicase and the helicase assembly factor, promotes pairing of two homologous DNA molecules containing complementary single-stranded regions and mediates homologous DNA strand exchange. Also promotes the formation of joint molecules. mRNA specific autogenous translational repressor. This chain is Single-stranded DNA-binding protein, found in Escherichia coli (Bacteriophage T4).